Reading from the N-terminus, the 97-residue chain is Translation initiation factor 1A (97 aa).

The S1-like domain maps to 8-82; that stretch reads IRVRLPDRKK…DRADIVWRYT (75 aa).

It belongs to the eIF-1A family.

Its function is as follows. Seems to be required for maximal rate of protein biosynthesis. Enhances ribosome dissociation into subunits and stabilizes the binding of the initiator Met-tRNA(I) to 40 S ribosomal subunits. This chain is Translation initiation factor 1A (eIF1A), found in Archaeoglobus fulgidus (strain ATCC 49558 / DSM 4304 / JCM 9628 / NBRC 100126 / VC-16).